We begin with the raw amino-acid sequence, 145 residues long: Transcription antitermination protein NusB (145 aa).

The protein belongs to the NusB family.

Functionally, involved in transcription antitermination. Required for transcription of ribosomal RNA (rRNA) genes. Binds specifically to the boxA antiterminator sequence of the ribosomal RNA (rrn) operons. This chain is Transcription antitermination protein NusB, found in Aromatoleum aromaticum (strain DSM 19018 / LMG 30748 / EbN1) (Azoarcus sp. (strain EbN1)).